A 370-amino-acid chain; its full sequence is Peptidoglycan glycosyltransferase MrdB (370 aa).

9 helical membrane-spanning segments follow: residues 20–40, 50–70, 75–95, 136–156, 160–180, 183–203, 263–283, 312–332, and 336–356; these read MLLI…SASG, IGQI…PPRV, APYL…FGAI, SLKN…LVAA, LGTS…SGLS, LIGV…FFLM, FIFA…LLAL, LILF…LPVV, and LPLV…FGIV.

The protein belongs to the SEDS family. MrdB/RodA subfamily.

It is found in the cell inner membrane. It catalyses the reaction [GlcNAc-(1-&gt;4)-Mur2Ac(oyl-L-Ala-gamma-D-Glu-L-Lys-D-Ala-D-Ala)](n)-di-trans,octa-cis-undecaprenyl diphosphate + beta-D-GlcNAc-(1-&gt;4)-Mur2Ac(oyl-L-Ala-gamma-D-Glu-L-Lys-D-Ala-D-Ala)-di-trans,octa-cis-undecaprenyl diphosphate = [GlcNAc-(1-&gt;4)-Mur2Ac(oyl-L-Ala-gamma-D-Glu-L-Lys-D-Ala-D-Ala)](n+1)-di-trans,octa-cis-undecaprenyl diphosphate + di-trans,octa-cis-undecaprenyl diphosphate + H(+). It participates in cell wall biogenesis; peptidoglycan biosynthesis. In terms of biological role, peptidoglycan polymerase that is essential for cell wall elongation. This chain is Peptidoglycan glycosyltransferase MrdB, found in Escherichia coli O157:H7.